Consider the following 28-residue polypeptide: Somatostatin-2 (28 aa).

The cysteines at positions 17 and 28 are disulfide-linked.

The protein belongs to the somatostatin family.

The protein resides in the secreted. Its function is as follows. Somatostatin inhibits the release of somatotropin. The protein is Somatostatin-2 (sst2) of Oreochromis niloticus (Nile tilapia).